The chain runs to 234 residues: 2,3-bisphosphoglycerate-dependent phosphoglycerate mutase (234 aa).

Substrate contacts are provided by residues 8-15 (RHGESVWN), 21-22 (TG), Arg-60, 87-90 (ERHY), Lys-98, 114-115 (RR), and 183-184 (GN). His-9 (tele-phosphohistidine intermediate) is an active-site residue. Residue Glu-87 is the Proton donor/acceptor of the active site.

Belongs to the phosphoglycerate mutase family. BPG-dependent PGAM subfamily. Homodimer.

The catalysed reaction is (2R)-2-phosphoglycerate = (2R)-3-phosphoglycerate. It participates in carbohydrate degradation; glycolysis; pyruvate from D-glyceraldehyde 3-phosphate: step 3/5. In terms of biological role, catalyzes the interconversion of 2-phosphoglycerate and 3-phosphoglycerate. The chain is 2,3-bisphosphoglycerate-dependent phosphoglycerate mutase from Citrifermentans bemidjiense (strain ATCC BAA-1014 / DSM 16622 / JCM 12645 / Bem) (Geobacter bemidjiensis).